A 285-amino-acid chain; its full sequence is 1-acyl-sn-glycerol-3-phosphate acyltransferase alpha (285 aa).

The signal sequence occupies residues 1 to 28 (MELWPGAWTALLLLLLLLLSTLWFCSSS). The Lumenal portion of the chain corresponds to 29-34 (AKYFFK). The helical transmembrane segment at 35–55 (MAFYNGWILFLAILAIPVCAV) threads the bilayer. Topologically, residues 56–124 (RGRNVENMKI…PDRCVPIAKR (69 aa)) are cytoplasmic. Positions 101 to 106 (HQSSLD) match the HXXXXD motif motif. A helical transmembrane segment spans residues 125–145 (ELLWAGSAGLACWLAGIIFID). Topologically, residues 146 to 189 (RKRTGDAISVMSEVAQTLLTQDVRVWVFPEGTRNHNGSMLPFKR) are lumenal. The EGTR motif motif lies at 175–178 (EGTR).

The protein belongs to the 1-acyl-sn-glycerol-3-phosphate acyltransferase family. As to expression, widely expressed.

It localises to the endoplasmic reticulum membrane. It carries out the reaction a 1-acyl-sn-glycero-3-phosphate + an acyl-CoA = a 1,2-diacyl-sn-glycero-3-phosphate + CoA. It catalyses the reaction 1-(9Z-octadecenoyl)-sn-glycero-3-phosphate + (9Z)-octadecenoyl-CoA = 1,2-di-(9Z-octadecenoyl)-sn-glycero-3-phosphate + CoA. The enzyme catalyses 1-(9Z-octadecenoyl)-sn-glycero-3-phosphate + hexadecanoyl-CoA = 1-(9Z)-octadecenoyl-2-hexadecanoyl-sn-glycero-3-phosphate + CoA. The catalysed reaction is heptadecanoyl-CoA + 1-(9Z-octadecenoyl)-sn-glycero-3-phosphate = 1-(9Z)-octadecenoyl-2-heptadecanoyl-sn-glycero-3-phosphate + CoA. It carries out the reaction 1-(9Z-octadecenoyl)-sn-glycero-3-phosphate + octadecanoyl-CoA = 1-(9Z-octadecenoyl)-2-octadecanoyl-sn-glycero-3-phosphate + CoA. It catalyses the reaction 1-(9Z-octadecenoyl)-sn-glycero-3-phosphate + (9Z,12Z)-octadecadienoyl-CoA = 1-(9Z)-octadecenoyl-2-(9Z,12Z)-octadecadienoyl-sn-glycero-3-phosphate + CoA. The enzyme catalyses 1-(9Z-octadecenoyl)-sn-glycero-3-phosphate + tetradecanoyl-CoA = 1-(9Z)-octadecenoyl-2-tetradecanoyl-sn-glycero-3-phosphate + CoA. The catalysed reaction is pentadecanoyl-CoA + 1-(9Z-octadecenoyl)-sn-glycero-3-phosphate = 1-(9Z)-octadecenoyl-2-pentadecanoyl-sn-glycero-3-phosphate + CoA. It carries out the reaction 1-hexadecanoyl-sn-glycero-3-phosphate + (9Z)-octadecenoyl-CoA = 1-hexadecanoyl-2-(9Z-octadecenoyl)-sn-glycero-3-phosphate + CoA. It catalyses the reaction 1-(9Z,12Z,15Z)-octadecatrienoyl-sn-glycero-3-phosphate + (9Z)-octadecenoyl-CoA = 1-(9Z,12Z,15Z)-octadecatrienoyl-2-(9Z)-octadecenoyl-sn-glycero-3-phosphate + CoA. The enzyme catalyses 1-(6Z,9Z,12Z-octadecatrienoyl)-sn-glycero-3-phosphate + (9Z)-octadecenoyl-CoA = (6Z,9Z,12Z)-octadecatrienoyl-2-(9Z)-octadecenoyl-sn-glycero-3-phosphate + CoA. The catalysed reaction is 1-eicosanoyl-sn-glycero-3-phosphate + (9Z)-octadecenoyl-CoA = 1-eicosanoyl-2-(9Z)-octadecenoyl-sn-glycero-3-phosphate + CoA. It carries out the reaction 1-tetradecanoyl-sn-glycerol 3-phosphate + (9Z)-octadecenoyl-CoA = 1-tetradecanoyl-2-(9Z)-octadecenoyl-sn-glycero-3-phosphate + CoA. It catalyses the reaction 1-(9Z-octadecenoyl)-sn-glycero-3-phosphate + (5Z,8Z,11Z,14Z)-eicosatetraenoyl-CoA = 1-(9Z)-octadecenoyl-2-(5Z,8Z,11Z,14Z)-eicosatetraenoyl-sn-glycero-3-phosphate + CoA. The enzyme catalyses 1-(9Z-octadecenoyl)-sn-glycero-3-phosphate + dodecanoyl-CoA = 1-(9Z)-octadecenoyl-2-dodecanoyl-sn-glycero-3-phosphate + CoA. The catalysed reaction is (6Z)-octadecenoyl-CoA + 1-(9Z-octadecenoyl)-sn-glycero-3-phosphate = 1-(9Z)-octadecenoyl-2-(6Z)-octadecenoyl-sn-glycero-3-phosphate + CoA. It carries out the reaction (11Z)-octadecenoyl-CoA + 1-(9Z-octadecenoyl)-sn-glycero-3-phosphate = 1-(9Z)-octadecenoyl-2-(11Z)-octadecenoyl-sn-glycero-3-phosphate + CoA. It catalyses the reaction (9Z)-hexadecenoyl-CoA + 1-(9Z-octadecenoyl)-sn-glycero-3-phosphate = 1-(9Z-octadecenoyl)-2-(9Z-hexadecenoyl)-sn-glycero-3-phosphate + CoA. It participates in phospholipid metabolism; CDP-diacylglycerol biosynthesis; CDP-diacylglycerol from sn-glycerol 3-phosphate: step 2/3. Its function is as follows. Converts 1-acyl-sn-glycerol-3-phosphate (lysophosphatidic acid or LPA) into 1,2-diacyl-sn-glycerol-3-phosphate (phosphatidic acid or PA) by incorporating an acyl moiety at the sn-2 position of the glycerol backbone. The polypeptide is 1-acyl-sn-glycerol-3-phosphate acyltransferase alpha (Agpat1) (Mus musculus (Mouse)).